A 138-amino-acid polypeptide reads, in one-letter code: Cysteine desulfuration protein SufE (138 aa).

The active-site Cysteine persulfide intermediate is cysteine 51.

The protein belongs to the SufE family. Homodimer. Interacts with SufS.

The protein resides in the cytoplasm. It functions in the pathway cofactor biosynthesis; iron-sulfur cluster biosynthesis. Its function is as follows. Participates in cysteine desulfuration mediated by SufS. Cysteine desulfuration mobilizes sulfur from L-cysteine to yield L-alanine and constitutes an essential step in sulfur metabolism for biosynthesis of a variety of sulfur-containing biomolecules. Functions as a sulfur acceptor for SufS, by mediating the direct transfer of the sulfur atom from the S-sulfanylcysteine of SufS, an intermediate product of cysteine desulfuration process. The protein is Cysteine desulfuration protein SufE of Sodalis glossinidius (strain morsitans).